Consider the following 394-residue polypeptide: uncharacterized protein (394 aa).

2 helical membrane passes run 31–51 (LAIL…LSGL) and 57–77 (LIIA…SLLI).

Belongs to the chlamydial CPn_0129/CT_036/TC_0306 family.

It localises to the cell membrane. This is an uncharacterized protein from Chlamydia pneumoniae (Chlamydophila pneumoniae).